The chain runs to 358 residues: Uroporphyrinogen decarboxylase (358 aa).

Residues 36-40 (RQAGR), aspartate 85, tyrosine 160, serine 215, and histidine 338 each bind substrate.

Belongs to the uroporphyrinogen decarboxylase family. In terms of assembly, homodimer.

The protein localises to the cytoplasm. It carries out the reaction uroporphyrinogen III + 4 H(+) = coproporphyrinogen III + 4 CO2. It functions in the pathway porphyrin-containing compound metabolism; protoporphyrin-IX biosynthesis; coproporphyrinogen-III from 5-aminolevulinate: step 4/4. Its function is as follows. Catalyzes the decarboxylation of four acetate groups of uroporphyrinogen-III to yield coproporphyrinogen-III. The sequence is that of Uroporphyrinogen decarboxylase from Corynebacterium glutamicum (strain R).